A 764-amino-acid chain; its full sequence is Complement factor B (764 aa).

The signal sequence occupies residues 1–25 (MGSNLSPQLCLMPFILGLLSGGVTT). 3 Sushi domains span residues 35–100 (ESCS…ECRA), 101–160 (IHCP…ICDN), and 163–220 (GYCS…SCQD). 6 disulfide bridges follow: Cys37–Cys76, Cys62–Cys98, Cys103–Cys145, Cys131–Cys158, Cys165–Cys205, and Cys191–Cys218. Residues Asn122 and Asn142 are each glycosylated (N-linked (GlcNAc...) asparagine). The VWFA domain maps to 270–469 (NIYLVLDGSD…NLEDVFYQMI (200 aa)). Mg(2+)-binding residues include Ser278 and Ser280. Asn285 carries an N-linked (GlcNAc...) asparagine glycan. Thr353 is a binding site for Mg(2+). The N-linked (GlcNAc...) asparagine glycan is linked to Asn378. The region spanning 477-757 (LCGMVWEHRK…VLPWLKEKLQ (281 aa)) is the Peptidase S1 domain. Intrachain disulfides connect Cys478–Cys596, Cys511–Cys527, Cys599–Cys615, Cys656–Cys682, and Cys695–Cys725. Active-site charge relay system residues include His526 and Asp576. Ser699 acts as the Charge relay system in catalysis.

It belongs to the peptidase S1 family. Monomer. Interacts with complement C3b; this interaction is dependent on the presence of Mg(2+). In terms of assembly, catalytic component of the C3 convertase of the alternative complement pathway, also named C3bBb, composed of complement factor B Bb and complement C3b. Catalytic component of the C5 convertase of the alternative complement pathway, also named C3bBb3b, composed of complement factor B Bb and additional molecules of complement C3b. Interacts to CFP; this interaction contributes to the stabilization of the active C3-convertase enzyme complex. Mg(2+) serves as cofactor. The cofactor is Mn(2+). Post-translationally, cleaved by CFD following activation of the alternative complement system, generating Ba and Bb chains. Cleavage and activation takes place when CFB is already associated with complement C3b.

It localises to the secreted. It is found in the cell surface. It carries out the reaction Cleavage of Arg-|-Ser bond in complement component C3 alpha-chain to yield C3a and C3b, and Arg-|-Xaa bond in complement component C5 alpha-chain to yield C5a and C5b.. Precursor of the catalytic component of the C3 and C5 convertase complexes of the alternative pathway of the complement system, a cascade of proteins that leads to phagocytosis and breakdown of pathogens and signaling that strengthens the adaptive immune system. The alternative complement pathway acts as an amplification loop that enhances other complement pathways (classical, lectin and GZMK) by promoting formation of additional C3 and C5 convertases. CFB is cleaved and activated by CFD to generate Ba and Bb chains; Bb chain constituting the catalytic component of the C3 and C5 convertases. In terms of biological role, serine protease component of the complement C3 and C5 convertase complexes of the alternative complement pathway. Following cleavage and activation by factor D (CFD), forms the C3 convertase together with complement C3b. As part of the C3 convertase, cleaves and activates C3 into C3a anaphylatoxin and C3b opsonin, the next components of the complement pathways. When an additional complement C3b molecule binds to the C3 convertase, forms the C5 convertase, which cleaves and activates C5 into C5a anaphylatoxin and C5b component of the membrane attack complex. Functionally, involved in proliferation and differentiation of preactivated B-lymphocytes, rapid spreading of peripheral blood monocytes, stimulation of lymphocyte blastogenesis and lysis of erythrocytes. This is Complement factor B (CFB) from Pan troglodytes (Chimpanzee).